Here is a 368-residue protein sequence, read N- to C-terminus: Probable endopolygalacturonase A (368 aa).

The N-terminal stretch at 1–18 is a signal peptide; it reads MRSVELLSLAALGSLVAA. Residues 19 to 31 constitute a propeptide that is removed on maturation; the sequence is APAPSRVSDLTKR. Cysteine 35 and cysteine 50 are oxidised to a cystine. PbH1 repeat units follow at residues 140–162, 167–192, 193–214, 215–235, 244–265, 273–295, and 307–352; these read LEDS…SVQA, LIDI…DISE, STGV…AINS, GENI…SIGS, VKNV…RIKT, VSEV…VIEQ, and TTGV…DITG. Catalysis depends on aspartate 207, which acts as the Proton donor. A disulfide bond links cysteine 209 and cysteine 225. Residue histidine 229 is part of the active site. N-linked (GlcNAc...) asparagine glycosylation occurs at asparagine 246. 2 disulfide bridges follow: cysteine 335/cysteine 340 and cysteine 359/cysteine 368.

Belongs to the glycosyl hydrolase 28 family.

It is found in the secreted. The enzyme catalyses (1,4-alpha-D-galacturonosyl)n+m + H2O = (1,4-alpha-D-galacturonosyl)n + (1,4-alpha-D-galacturonosyl)m.. Functionally, involved in maceration and soft-rotting of plant tissue. Hydrolyzes the 1,4-alpha glycosidic bonds of de-esterified pectate in the smooth region of the plant cell wall. This is Probable endopolygalacturonase A (pgaA) from Neosartorya fischeri (strain ATCC 1020 / DSM 3700 / CBS 544.65 / FGSC A1164 / JCM 1740 / NRRL 181 / WB 181) (Aspergillus fischerianus).